Reading from the N-terminus, the 590-residue chain is Suprabasin (590 aa).

The N-terminal stretch at 1–25 (MHLARLVGSCSLLLLLGALSGWAAS) is a signal peptide. Disordered stretches follow at residues 182–213 (GNEA…AHHG), 242–266 (FGQG…GVHH), 297–338 (GQGA…GVHH), and 545–570 (LNGN…SGAS). 4 stretches are compositionally biased toward low complexity: residues 190-200 (QGVHHAAGQAG), 243-254 (GQGAHHAAGQAG), 297-330 (GQGA…NEAG), and 546-559 (NGNH…HQGG). The span at 560–570 (ATTTPLASGAS) shows a compositional bias: polar residues.

Detected in thymus, uterus and esophagus.

It localises to the secreted. This is Suprabasin (SBSN) from Homo sapiens (Human).